The following is a 380-amino-acid chain: Cytochrome b (380 aa).

4 helical membrane-spanning segments follow: residues 34 to 54 (FGSL…LLAT), 78 to 99 (WLIR…YLHI), 114 to 134 (WNTG…GYVL), and 179 to 199 (FFAL…IHLT). Residues His84 and His98 each contribute to the heme b site. Heme b is bound by residues His183 and His197. His202 provides a ligand contact to a ubiquinone. Transmembrane regions (helical) follow at residues 227 to 247 (LKDI…ALFS), 289 to 309 (LGGV…PLLH), 321 to 341 (FSQF…WVGS), and 348 to 368 (FIII…LLFP).

This sequence belongs to the cytochrome b family. The cytochrome bc1 complex contains 11 subunits: 3 respiratory subunits (MT-CYB, CYC1 and UQCRFS1), 2 core proteins (UQCRC1 and UQCRC2) and 6 low-molecular weight proteins (UQCRH/QCR6, UQCRB/QCR7, UQCRQ/QCR8, UQCR10/QCR9, UQCR11/QCR10 and a cleavage product of UQCRFS1). This cytochrome bc1 complex then forms a dimer. It depends on heme b as a cofactor.

The protein localises to the mitochondrion inner membrane. In terms of biological role, component of the ubiquinol-cytochrome c reductase complex (complex III or cytochrome b-c1 complex) that is part of the mitochondrial respiratory chain. The b-c1 complex mediates electron transfer from ubiquinol to cytochrome c. Contributes to the generation of a proton gradient across the mitochondrial membrane that is then used for ATP synthesis. The sequence is that of Cytochrome b (MT-CYB) from Alle alle (Dovekie).